The chain runs to 101 residues: MSQITEEQVKHVALLSKLEFSENEVKSFTDTFGKIIDMVEMLDEVDTDGVPFTMNVADNLNFMREDVAEKGLDREKLMAAVPEKEDGFIKVPAMLSDGGDA.

The protein belongs to the GatC family. Heterotrimer of A, B and C subunits.

The enzyme catalyses L-glutamyl-tRNA(Gln) + L-glutamine + ATP + H2O = L-glutaminyl-tRNA(Gln) + L-glutamate + ADP + phosphate + H(+). It carries out the reaction L-aspartyl-tRNA(Asn) + L-glutamine + ATP + H2O = L-asparaginyl-tRNA(Asn) + L-glutamate + ADP + phosphate + 2 H(+). Its function is as follows. Allows the formation of correctly charged Asn-tRNA(Asn) or Gln-tRNA(Gln) through the transamidation of misacylated Asp-tRNA(Asn) or Glu-tRNA(Gln) in organisms which lack either or both of asparaginyl-tRNA or glutaminyl-tRNA synthetases. The reaction takes place in the presence of glutamine and ATP through an activated phospho-Asp-tRNA(Asn) or phospho-Glu-tRNA(Gln). This is Aspartyl/glutamyl-tRNA(Asn/Gln) amidotransferase subunit C from Lactococcus lactis subsp. cremoris (strain SK11).